The chain runs to 333 residues: Adenosine deaminase (333 aa).

Zn(2+) contacts are provided by His-12 and His-14. Substrate contacts are provided by His-14, Asp-16, and Gly-170. His-197 is a Zn(2+) binding site. Glu-200 functions as the Proton donor in the catalytic mechanism. Residue Asp-278 participates in Zn(2+) binding. Asp-279 serves as a coordination point for substrate.

Belongs to the metallo-dependent hydrolases superfamily. Adenosine and AMP deaminases family. Adenosine deaminase subfamily. The cofactor is Zn(2+).

It catalyses the reaction adenosine + H2O + H(+) = inosine + NH4(+). The catalysed reaction is 2'-deoxyadenosine + H2O + H(+) = 2'-deoxyinosine + NH4(+). Functionally, catalyzes the hydrolytic deamination of adenosine and 2-deoxyadenosine. The chain is Adenosine deaminase from Aliivibrio fischeri (strain MJ11) (Vibrio fischeri).